The primary structure comprises 144 residues: Glutaredoxin-C6 (144 aa).

The 105-residue stretch at 39-143 (EAKIRRLISE…PKLVQVGALW (105 aa)) folds into the Glutaredoxin domain. The cysteines at positions 59 and 62 are disulfide-linked.

The protein belongs to the glutaredoxin family. CC-type subfamily.

It localises to the cytoplasm. Has a glutathione-disulfide oxidoreductase activity in the presence of NADPH and glutathione reductase. Reduces low molecular weight disulfides and proteins. This chain is Glutaredoxin-C6 (GRXC6), found in Arabidopsis thaliana (Mouse-ear cress).